A 230-amino-acid polypeptide reads, in one-letter code: Cytochrome b6-f complex iron-sulfur subunit, chloroplastic (230 aa).

Residues 1–16 (MASTTLSATPTPSQLS) are compositionally biased toward low complexity. The tract at residues 1-20 (MASTTLSATPTPSQLSAAKN) is disordered. A chloroplast-targeting transit peptide spans 1 to 56 (MASTTLSATPTPSQLSAAKNGAYSPSRALLGKTARGLYPEKEMVSRKVTCQATSIP). Residues 73–93 (LLGALSLPTAGMLIPYGAFFV) form a helical membrane-spanning segment. The Rieske domain maps to 116–212 (AAAWLKTHGP…CDISEEGKVV (97 aa)). Residues Cys158, His160, Cys176, and His179 each coordinate [2Fe-2S] cluster. A disulfide bridge connects residues Cys163 and Cys178.

It belongs to the Rieske iron-sulfur protein family. The 4 large subunits of the cytochrome b6-f complex are cytochrome b6, subunit IV (17 kDa polypeptide, petD), cytochrome f and the Rieske protein, while the 4 small subunits are petG, petL, petM and petN. The complex functions as a dimer. The cofactor is [2Fe-2S] cluster.

It is found in the plastid. Its subcellular location is the chloroplast thylakoid membrane. It carries out the reaction 2 oxidized [plastocyanin] + a plastoquinol + 2 H(+)(in) = 2 reduced [plastocyanin] + a plastoquinone + 4 H(+)(out). In terms of biological role, component of the cytochrome b6-f complex, which mediates electron transfer between photosystem II (PSII) and photosystem I (PSI), cyclic electron flow around PSI, and state transitions. In Fritillaria agrestis (Stinkbells), this protein is Cytochrome b6-f complex iron-sulfur subunit, chloroplastic (petC).